A 220-amino-acid chain; its full sequence is Fructose-6-phosphate aldolase (220 aa).

Lysine 85 acts as the Schiff-base intermediate with substrate in catalysis.

This sequence belongs to the transaldolase family. Type 3A subfamily. Homodecamer.

It is found in the cytoplasm. The enzyme catalyses beta-D-fructose 6-phosphate = dihydroxyacetone + D-glyceraldehyde 3-phosphate. Functionally, catalyzes the reversible formation of fructose 6-phosphate from dihydroxyacetone and D-glyceraldehyde 3-phosphate via an aldolization reaction. This chain is Fructose-6-phosphate aldolase, found in Salmonella heidelberg (strain SL476).